Here is an 892-residue protein sequence, read N- to C-terminus: Alpha-actinin-1 (892 aa).

An N-acetylmethionine modification is found at methionine 1. Positions 1–247 (MDHYDSQQTN…IMTYVSSFYH (247 aa)) are actin-binding. At serine 6 the chain carries Phosphoserine. Tyrosine 12 carries the phosphotyrosine; by FAK1 modification. 2 consecutive Calponin-homology (CH) domains span residues 31-135 (KQQR…LRFA) and 144-250 (TSAK…HAFS). Lysine 95 and lysine 195 each carry N6-acetyllysine. Spectrin repeat units follow at residues 274–384 (QLME…WLLN), 394–499 (HLAE…ALER), 509–620 (QLYL…ALTE), and 630–733 (RLRK…EVEN). An interaction with DDN region spans residues 274 to 733 (QLMEDYEKLA…IARTINEVEN (460 aa)). The residue at position 471 (serine 471) is a Phosphoserine. Lysine 676 is modified (N6-acetyllysine). Position 677 is a phosphoserine (serine 677). EF-hand domains are found at residues 746 to 781 (EQMN…LGYD) and 787 to 822 (QGEA…ETAD). Ca(2+) contacts are provided by aspartate 759, aspartate 761, serine 763, threonine 765, and glutamate 770. Serine 890 is subject to Phosphoserine.

The protein belongs to the alpha-actinin family. As to quaternary structure, homodimer; antiparallel. Interacts with MYOZ2, TTID and LPP. Interacts with DDN. Interacts with PSD. Interacts with MICALL2. Interacts with DNM2 and CTTN. Interacts with PDLIM1. Interacts with PDLIM2. Interacts with PDLIM4 (via PDZ domain). Interacts with IGSF8.

It localises to the cytoplasm. The protein localises to the cytoskeleton. Its subcellular location is the myofibril. It is found in the sarcomere. The protein resides in the z line. It localises to the cell membrane. The protein localises to the cell junction. Its subcellular location is the cell projection. It is found in the ruffle. Its function is as follows. F-actin cross-linking protein which is thought to anchor actin to a variety of intracellular structures. Association with IGSF8 regulates the immune synapse formation and is required for efficient T-cell activation. This Rattus norvegicus (Rat) protein is Alpha-actinin-1 (Actn1).